The following is a 399-amino-acid chain: Tryptophan synthase beta chain (399 aa).

Lysine 91 is modified (N6-(pyridoxal phosphate)lysine).

It belongs to the TrpB family. Tetramer of two alpha and two beta chains. Pyridoxal 5'-phosphate serves as cofactor.

It carries out the reaction (1S,2R)-1-C-(indol-3-yl)glycerol 3-phosphate + L-serine = D-glyceraldehyde 3-phosphate + L-tryptophan + H2O. The protein operates within amino-acid biosynthesis; L-tryptophan biosynthesis; L-tryptophan from chorismate: step 5/5. The beta subunit is responsible for the synthesis of L-tryptophan from indole and L-serine. The polypeptide is Tryptophan synthase beta chain (Shouchella clausii (strain KSM-K16) (Alkalihalobacillus clausii)).